We begin with the raw amino-acid sequence, 344 residues long: Ferrochelatase (344 aa).

His-211 and Glu-292 together coordinate Fe cation.

It belongs to the ferrochelatase family.

The protein resides in the cytoplasm. The catalysed reaction is heme b + 2 H(+) = protoporphyrin IX + Fe(2+). Its pathway is porphyrin-containing compound metabolism; protoheme biosynthesis; protoheme from protoporphyrin-IX: step 1/1. Catalyzes the ferrous insertion into protoporphyrin IX. The sequence is that of Ferrochelatase from Methylobacillus flagellatus (strain ATCC 51484 / DSM 6875 / VKM B-1610 / KT).